The chain runs to 394 residues: MAVLDLALQGLAIFGCVLFFVLWFMHFLSIVYTRLHLNKKVSDKQPYSKLPGVSLLKPLKGVDPNLINNLETFFELDYPKFEILLCVQDLDDPAVDVCKKLLGKYPSVDAKLFIGGKKVGINPKINNLMPGYEVAKYDLIWICDSGIKVKPDTLTDMANQMTEKVGLVHGLPYVADRQGFAATLEQVYFGTSHPRSYISANVTGFKCVTGMSCLMRKEVLDQAGGLIAFAQYIAEDYFMAKAIADRGWKFSMATQVAMQNSGCYSISQFQSRMIRWAKLRINMLPATIICEPISECFVASLIIGWAAHHIFRWDIMVFFMCHCLAWFIFDYIQLRGVQGGPLNFSKLDYAVAWFIRESMTIYIFLSALWDPTISWRTGRYRLRCGGTAEEILDV.

Residues 1–10 (MAVLDLALQG) are Lumenal-facing. A helical membrane pass occupies residues 11-32 (LAIFGCVLFFVLWFMHFLSIVY). The Cytoplasmic portion of the chain corresponds to 33 to 195 (TRLHLNKKVS…QVYFGTSHPR (163 aa)). Aspartate 92 is a short sequence motif (D1). A short sequence motif (D2) is located at residue aspartate 144. Residues 196 to 215 (SYISANVTGFKCVTGMSCLM) form a helical membrane-spanning segment. Over 216–287 (RKEVLDQAGG…KLRINMLPAT (72 aa)) the chain is Lumenal. Aspartate 236 is a short sequence motif (D3). The active-site Proton acceptor is aspartate 236. The (Q/R)XXRW motif lies at 272–276 (RMIRW). A helical membrane pass occupies residues 288-304 (IICEPISECFVASLIIG). The Cytoplasmic portion of the chain corresponds to 305–309 (WAAHH). The helical transmembrane segment at 310–328 (IFRWDIMVFFMCHCLAWFI) threads the bilayer. The Lumenal portion of the chain corresponds to 329–348 (FDYIQLRGVQGGPLNFSKLD). Residues 349 to 369 (YAVAWFIRESMTIYIFLSALW) traverse the membrane as a helical segment. Over 370–394 (DPTISWRTGRYRLRCGGTAEEILDV) the chain is Cytoplasmic.

The protein belongs to the glycosyltransferase 2 family.

It is found in the golgi apparatus membrane. It carries out the reaction an N-acylsphing-4-enine + UDP-alpha-D-glucose = a beta-D-glucosyl-(1&lt;-&gt;1')-N-acylsphing-4-enine + UDP + H(+). The enzyme catalyses UDP-alpha-D-xylose + an N-acylsphing-4-enine = a beta-D-xylosyl-(1&lt;-&gt;1')-N-acylsphing-4-enine + UDP + H(+). The catalysed reaction is N-(9Z-octadecenoyl)-sphing-4-enine + UDP-alpha-D-xylose = beta-D-xylosyl-(1&lt;-&gt;1')-N-(9Z-octadecenoyl)-sphing-4-enine + UDP + H(+). It participates in lipid metabolism; sphingolipid metabolism. Its function is as follows. Participates in the initial step of the glucosylceramide-based glycosphingolipid/GSL synthetic pathway at the cytosolic surface of the Golgi. Catalyzes the transfer of glucose from UDP-glucose to ceramide to produce glucosylceramide/GlcCer (such as beta-D-glucosyl-(1&lt;-&gt;1')-N-acylsphing-4-enine). Glucosylceramide is the core component of glycosphingolipids/GSLs, amphipathic molecules consisting of a ceramide lipid moiety embedded in the outer leaflet of the membrane, linked to one of hundreds of different externally oriented oligosaccharide structures. Glycosphingolipids are essential components of membrane microdomains that mediate membrane trafficking and signal transduction. They are implicated in many fundamental cellular processes, including growth, differentiation, migration, morphogenesis, cell-to-cell and cell-to-matrix interactions. Catalyzes the synthesis of xylosylceramide/XylCer (such as beta-D-xylosyl-(1&lt;-&gt;1')-N-acylsphing-4-enine) using UDP-Xyl as xylose donor. The polypeptide is Ceramide glucosyltransferase (ugcg) (Xenopus tropicalis (Western clawed frog)).